A 308-amino-acid polypeptide reads, in one-letter code: tRNA pseudouridine synthase B (308 aa).

D47 (nucleophile) is an active-site residue.

This sequence belongs to the pseudouridine synthase TruB family. Type 1 subfamily.

The enzyme catalyses uridine(55) in tRNA = pseudouridine(55) in tRNA. Responsible for synthesis of pseudouridine from uracil-55 in the psi GC loop of transfer RNAs. This is tRNA pseudouridine synthase B from Xanthomonas campestris pv. campestris (strain B100).